A 278-amino-acid chain; its full sequence is Small ribosomal subunit protein uS2 (278 aa).

2 disordered regions span residues 216-235 (EAAAAAKEAEDDTGYTTQWD) and 250-278 (NFAAAPADGNWGATTGGDWAAAGGEEWTN). Over residues 256-278 (ADGNWGATTGGDWAAAGGEEWTN) the composition is skewed to low complexity.

It belongs to the universal ribosomal protein uS2 family. In terms of assembly, component of the small ribosomal subunit. Mature ribosomes consist of a small (40S) and a large (60S) subunit. The 40S subunit contains about 33 different proteins and 1 molecule of RNA (18S). The 60S subunit contains about 49 different proteins and 3 molecules of RNA (25S, 5.8S and 5S). Interacts with ribosomal protein S21.

The protein localises to the cytoplasm. In terms of biological role, required for the assembly and/or stability of the 40S ribosomal subunit. Required for the processing of the 20S rRNA-precursor to mature 18S rRNA in a late step of the maturation of 40S ribosomal subunits. This Monosiga brevicollis (Choanoflagellate) protein is Small ribosomal subunit protein uS2.